Consider the following 697-residue polypeptide: Methionine--tRNA ligase (697 aa).

Positions 11–21 match the 'HIGH' region motif; the sequence is PYANGPIHLGH. Zn(2+) is bound by residues C142, C145, C155, and C158. A 'KMSKS' region motif is present at residues 343–347; it reads KMSKS. An ATP-binding site is contributed by K346. Residues 595 to 697 enclose the tRNA-binding domain; it reads DFMKVEMTVA…DECKVGDKLA (103 aa).

This sequence belongs to the class-I aminoacyl-tRNA synthetase family. MetG type 1 subfamily. Homodimer. It depends on Zn(2+) as a cofactor.

It localises to the cytoplasm. It carries out the reaction tRNA(Met) + L-methionine + ATP = L-methionyl-tRNA(Met) + AMP + diphosphate. In terms of biological role, is required not only for elongation of protein synthesis but also for the initiation of all mRNA translation through initiator tRNA(fMet) aminoacylation. The chain is Methionine--tRNA ligase from Psychrobacter sp. (strain PRwf-1).